We begin with the raw amino-acid sequence, 226 residues long: Putative 5'-nucleotidase alr3139 (226 aa).

The a divalent metal cation site is built by Asp8, Asp9, Ser38, and Asn89.

It belongs to the SurE nucleotidase family. It depends on a divalent metal cation as a cofactor.

The protein resides in the cytoplasm. It catalyses the reaction a ribonucleoside 5'-phosphate + H2O = a ribonucleoside + phosphate. Nucleotidase that shows phosphatase activity on nucleoside 5'-monophosphates. The chain is Putative 5'-nucleotidase alr3139 from Nostoc sp. (strain PCC 7120 / SAG 25.82 / UTEX 2576).